The primary structure comprises 346 residues: Holliday junction branch migration complex subunit RuvB (346 aa).

The tract at residues M1–Y182 is large ATPase domain (RuvB-L). ATP is bound by residues L21, R22, G63, K66, T67, T68, E129 to F131, R172, Y182, and R219. Residue T67 coordinates Mg(2+). A small ATPAse domain (RuvB-S) region spans residues T183–L253. The tract at residues S256–D346 is head domain (RuvB-H). DNA-binding residues include R292, R311, and R316.

This sequence belongs to the RuvB family. As to quaternary structure, homohexamer. Forms an RuvA(8)-RuvB(12)-Holliday junction (HJ) complex. HJ DNA is sandwiched between 2 RuvA tetramers; dsDNA enters through RuvA and exits via RuvB. An RuvB hexamer assembles on each DNA strand where it exits the tetramer. Each RuvB hexamer is contacted by two RuvA subunits (via domain III) on 2 adjacent RuvB subunits; this complex drives branch migration. In the full resolvosome a probable DNA-RuvA(4)-RuvB(12)-RuvC(2) complex forms which resolves the HJ.

It is found in the cytoplasm. The enzyme catalyses ATP + H2O = ADP + phosphate + H(+). Its function is as follows. The RuvA-RuvB-RuvC complex processes Holliday junction (HJ) DNA during genetic recombination and DNA repair, while the RuvA-RuvB complex plays an important role in the rescue of blocked DNA replication forks via replication fork reversal (RFR). RuvA specifically binds to HJ cruciform DNA, conferring on it an open structure. The RuvB hexamer acts as an ATP-dependent pump, pulling dsDNA into and through the RuvAB complex. RuvB forms 2 homohexamers on either side of HJ DNA bound by 1 or 2 RuvA tetramers; 4 subunits per hexamer contact DNA at a time. Coordinated motions by a converter formed by DNA-disengaged RuvB subunits stimulates ATP hydrolysis and nucleotide exchange. Immobilization of the converter enables RuvB to convert the ATP-contained energy into a lever motion, pulling 2 nucleotides of DNA out of the RuvA tetramer per ATP hydrolyzed, thus driving DNA branch migration. The RuvB motors rotate together with the DNA substrate, which together with the progressing nucleotide cycle form the mechanistic basis for DNA recombination by continuous HJ branch migration. Branch migration allows RuvC to scan DNA until it finds its consensus sequence, where it cleaves and resolves cruciform DNA. This is Holliday junction branch migration complex subunit RuvB from Sinorhizobium medicae (strain WSM419) (Ensifer medicae).